We begin with the raw amino-acid sequence, 313 residues long: Non-structural protein 3 (313 aa).

Positions 1–149 (MLKMESTQQM…TRLMKDKIEG (149 aa)) are RNA-binding. Residues 150 to 206 (GEVEVDDSYVDEKMEIDTIDWKSRYDQLEKRFEALKQRVNEKYNTWVQKAKKVNENM) form a dimerization region. Residues 166 to 237 (DTIDWKSRYD…NKLEADLQGK (72 aa)) adopt a coiled-coil conformation. The interval 170–234 (WKSRYDQLEK…QYCNKLEADL (65 aa)) is interaction with host ZC3H7B. The interval 208-313 (SLQNVISQQQ…KQCNYEYAYE (106 aa)) is interaction with host EIF4G1.

This sequence belongs to the rotavirus NSP3 family. In terms of assembly, homodimer. Interacts (via the coiled-coil region) with host ZC3H7B (via LD motif). Interacts with host EIF4G1.

It localises to the host cytoplasm. Plays an important role in stimulating the translation of viral mRNAs. These mRNAs are capped but not polyadenylated, instead terminating in a conserved sequence 'GACC' at the 3' that is recognized by NSP3, which competes with host PABPC1 for EIF4G1 binding. The interaction between NSP3 and host EIF4G1 stabilizes the EIF4E-EIF4G1 interaction, thereby facilitating the initiation of capped mRNA translation. The sequence is that of Non-structural protein 3 from Homo sapiens (Human).